The following is a 647-amino-acid chain: 1-phosphatidylinositol 4,5-bisphosphate phosphodiesterase zeta-1 (647 aa).

The region spanning 43–78 is the EF-hand domain; the sequence is CHFAHVKHIFKENDRQNQGRITIEEFRAIYRCIVHR. One can recognise a PI-PLC X-box domain in the interval 163 to 307; the sequence is QDMNHPLSDY…LKFKILVKNR (145 aa). Residues H178 and H223 contribute to the active site. Residues 386 to 502 enclose the PI-PLC Y-box domain; it reads LSDLVIYTKA…GYILKPDILR (117 aa). The C2 domain maps to 502–627; the sequence is RDTTLGFNPN…KGYRRVPLFS (126 aa).

Interacts via its C2 domain with PtdIns(3)P and, to a lesser extent, PtdIns(5)P in vitro. Ca(2+) is required as a cofactor. As to expression, highly expressed in postpuberal testis, where expression is sperm cell-specific. Also expressed in brain of both sexes.

The protein localises to the nucleus. Its subcellular location is the cytoplasm. It localises to the perinuclear region. It carries out the reaction a 1,2-diacyl-sn-glycero-3-phospho-(1D-myo-inositol-4,5-bisphosphate) + H2O = 1D-myo-inositol 1,4,5-trisphosphate + a 1,2-diacyl-sn-glycerol + H(+). The production of the second messenger molecules diacylglycerol (DAG) and inositol 1,4,5-trisphosphate (IP3) is mediated by activated phosphatidylinositol-specific phospholipase C enzymes. In vitro, hydrolyzes PtdIns(4,5)P2 in a Ca(2+)-dependent manner. Triggers intracellular Ca(2+) oscillations in oocytes solely during M phase and is involved in inducing oocyte activation and initiating embryonic development up to the blastocyst stage. Is therefore a strong candidate for the egg-activating soluble sperm factor that is transferred from the sperm into the egg cytoplasm following gamete membrane fusion. May exert an inhibitory effect on phospholipase-C-coupled processes that depend on calcium ions and protein kinase C, including CFTR trafficking and function. This chain is 1-phosphatidylinositol 4,5-bisphosphate phosphodiesterase zeta-1, found in Mus musculus (Mouse).